Reading from the N-terminus, the 343-residue chain is Versiconal hemiacetal acetate reductase (343 aa).

Y59 serves as the catalytic Proton donor. H144 contributes to the substrate binding site. Position 229 to 239 (229 to 239) interacts with NADP(+); sequence SPVARGALARP.

The protein belongs to the aldo/keto reductase family. Aldo/keto reductase 2 subfamily.

It carries out the reaction (2S)-versicolorone + NADP(+) = 1'-hydroxyversicolorone + NADPH + H(+). The catalysed reaction is (3S)-versiconol acetate + NADP(+) = (2S,3S)-versiconal hemiacetal acetate + NADPH + H(+). The enzyme catalyses (S)-versiconol + NADP(+) = (2S-3S)-versiconal hemiacetal + NADPH + H(+). In terms of biological role, catalyzes 3 reactions: from hydroxyversicolorone (HVN) to versicolorone (VONE), from versiconal hemiacetal acetate (VHA) to versiconol acetate (VOAc) and from versiconal (VHOH) to versiconol (VOH). Probably not an aflatoxin biosynthesis gene: may be involved in the vertical branching steps connecting the main pathway from HVN to VHOH with the side pathway from VONE to VOH. The sequence is that of Versiconal hemiacetal acetate reductase (vrdA) from Aspergillus parasiticus.